We begin with the raw amino-acid sequence, 360 residues long: Zinc metalloproteinase nas-5 (360 aa).

The first 21 residues, 1–21 (MDIKQLLLSIILTVSVVNGRG), serve as a signal peptide directing secretion. Residues 61–269 (NALLSNSPLR…KKVCAIYHCS (209 aa)) form the Peptidase M12A domain. Asparagine 108 is a glycosylation site (N-linked (GlcNAc...) asparagine). 2 disulfides stabilise this stretch: cysteine 111–cysteine 268 and cysteine 134–cysteine 157. Histidine 165 contributes to the Zn(2+) binding site. Glutamate 166 is an active-site residue. Histidine 169 and histidine 175 together coordinate Zn(2+). Residues 299-336 (QGDSCTDRLGICPMLKSREMLNCKVMATFCCSSCSAPT) form the PLAC domain.

Requires Zn(2+) as cofactor.

The protein localises to the secreted. Metalloprotease. The protein is Zinc metalloproteinase nas-5 (nas-5) of Caenorhabditis elegans.